The sequence spans 211 residues: MPVRIIDHVYAQYLLTRLRDKNTGSLDFRKGLVRLGRIIGYELVKTFPFRYVEVETPLGRAVGVDIIGLDKVVIVQILRAAMPLVEGLVKAFPNARLGVVAARRKEEEGYVDVEVFYSKMPSIGVEDTVIVADPMLATGTTMSKAIEEVYKTGTPGRLVVVSVIATPVGISRVLSRWPDTEIYTVAIDPELNDKAFIVPGLGDAGDRAFAT.

30–34 (KGLVR) is a binding site for GTP. Residues Arg-79, Arg-104, and 133 to 141 (DPMLATGTT) contribute to the 5-phospho-alpha-D-ribose 1-diphosphate site. Uracil is bound by residues Ile-197 and 202-204 (GDA). Residue Asp-203 coordinates 5-phospho-alpha-D-ribose 1-diphosphate.

It belongs to the UPRTase family. Requires Mg(2+) as cofactor.

It catalyses the reaction UMP + diphosphate = 5-phospho-alpha-D-ribose 1-diphosphate + uracil. Its pathway is pyrimidine metabolism; UMP biosynthesis via salvage pathway; UMP from uracil: step 1/1. With respect to regulation, allosterically activated by GTP. In terms of biological role, catalyzes the conversion of uracil and 5-phospho-alpha-D-ribose 1-diphosphate (PRPP) to UMP and diphosphate. In Pyrobaculum arsenaticum (strain DSM 13514 / JCM 11321 / PZ6), this protein is Uracil phosphoribosyltransferase.